The sequence spans 656 residues: Chaperone protein DnaK (656 aa).

Disordered regions lie at residues glutamate 488 to aspartate 532 and tyrosine 579 to glutamate 656. Positions glutamate 492–alanine 513 are enriched in basic and acidic residues. Positions leucine 523–aspartate 532 are enriched in acidic residues. The segment covering glycine 584–glycine 635 has biased composition (gly residues). A compositionally biased stretch (acidic residues) spans aspartate 636–glutamate 656.

It belongs to the heat shock protein 70 family.

Its function is as follows. Acts as a chaperone. The protein is Chaperone protein DnaK of Natronomonas pharaonis (strain ATCC 35678 / DSM 2160 / CIP 103997 / JCM 8858 / NBRC 14720 / NCIMB 2260 / Gabara) (Halobacterium pharaonis).